The sequence spans 459 residues: Pup--protein ligase (459 aa).

Glu9 serves as a coordination point for Mg(2+). Arg54 lines the ATP pocket. Tyr56 is a binding site for Mg(2+). Asp58 (proton acceptor) is an active-site residue. Glu64 serves as a coordination point for Mg(2+). 2 residues coordinate ATP: Thr67 and Trp421.

It belongs to the Pup ligase/Pup deamidase family. Pup-conjugating enzyme subfamily.

The enzyme catalyses ATP + [prokaryotic ubiquitin-like protein]-L-glutamate + [protein]-L-lysine = ADP + phosphate + N(6)-([prokaryotic ubiquitin-like protein]-gamma-L-glutamyl)-[protein]-L-lysine.. Its pathway is protein degradation; proteasomal Pup-dependent pathway. It functions in the pathway protein modification; protein pupylation. Its function is as follows. Catalyzes the covalent attachment of the prokaryotic ubiquitin-like protein modifier Pup to the proteasomal substrate proteins, thereby targeting them for proteasomal degradation. This tagging system is termed pupylation. The ligation reaction involves the side-chain carboxylate of the C-terminal glutamate of Pup and the side-chain amino group of a substrate lysine. The chain is Pup--protein ligase from Jonesia denitrificans (strain ATCC 14870 / DSM 20603 / BCRC 15368 / CIP 55.134 / JCM 11481 / NBRC 15587 / NCTC 10816 / Prevot 55134) (Listeria denitrificans).